Reading from the N-terminus, the 278-residue chain is Elongation factor Ts (278 aa).

The segment at Thr-80 to Val-83 is involved in Mg(2+) ion dislocation from EF-Tu.

It belongs to the EF-Ts family.

The protein resides in the cytoplasm. Associates with the EF-Tu.GDP complex and induces the exchange of GDP to GTP. It remains bound to the aminoacyl-tRNA.EF-Tu.GTP complex up to the GTP hydrolysis stage on the ribosome. This is Elongation factor Ts from Paenarthrobacter aurescens (strain TC1).